Consider the following 336-residue polypeptide: Cinnamoyl-CoA reductase 2 (336 aa).

NADP(+) is bound by residues 21-27 (GAGGFIA), Arg46, Lys52, 72-73 (DL), 92-94 (TAS), Tyr165, Lys169, 192-195 (PVVV), and Ser207. The cysteines at positions 158 and 166 are disulfide-linked. The Proton donor role is filled by Lys169.

It belongs to the NAD(P)-dependent epimerase/dehydratase family. Dihydroflavonol-4-reductase subfamily. Post-translationally, the formation of a reversible disulfide bond reduces activity by perturbing the positioning of nearby catalytic residues. In terms of tissue distribution, mainly expressed in roots and stems, especially at the second internode and, to a lower extent, in leaves and flowers. Localized in vascular elements, with weaker expression in the interfascicular (xylem fiber) region.

It is found in the cytoplasm. It carries out the reaction (E)-coniferaldehyde + NADP(+) + CoA = (E)-feruloyl-CoA + NADPH + H(+). It catalyses the reaction (E)-4-coumaraldehyde + NADP(+) + CoA = (E)-4-coumaroyl-CoA + NADPH + H(+). The enzyme catalyses (E)-sinapaldehyde + NADP(+) + CoA = (E)-sinapoyl-CoA + NADPH + H(+). The catalysed reaction is (E)-cinnamaldehyde + NADP(+) + CoA = (E)-cinnamoyl-CoA + NADPH + H(+). It carries out the reaction (E)-caffeyl aldehyde + NADP(+) + CoA = (E)-caffeoyl-CoA + NADPH + H(+). Its pathway is aromatic compound metabolism; phenylpropanoid biosynthesis. Its function is as follows. Involved in the latter stages of lignin biosynthesis. Catalyzes one of the last steps of monolignol biosynthesis, the conversion of cinnamoyl-CoAs into their corresponding cinnamaldehydes. Mediates the conversion of caffeoyl-CoA and coumaroyl-CoA to caffaldehyde and coumaraldehyde, respectively. Also active, with a lower efficiency, toward feruloyl-CoA and sinapoyl-CoA. Involved in the production of floral volatile phenylpropanoids in flowers of fragrant cultivars from cinnamic acid, a common precursor with the anthocyanin biosynthesis pathway involved in flower pigmentation. This is Cinnamoyl-CoA reductase 2 from Medicago truncatula (Barrel medic).